The sequence spans 200 residues: Small ribosomal subunit protein uS5 (200 aa).

Positions 1 to 22 (MAEERGEKRGRRRDRENPRDRD) are enriched in basic and acidic residues. The tract at residues 1 to 26 (MAEERGEKRGRRRDRENPRDRDDESS) is disordered. In terms of domain architecture, S5 DRBM spans 28-91 (LVDKLVGINR…EEAKRNLVRI (64 aa)).

Belongs to the universal ribosomal protein uS5 family. In terms of assembly, part of the 30S ribosomal subunit. Contacts proteins S4 and S8.

Its function is as follows. With S4 and S12 plays an important role in translational accuracy. In terms of biological role, located at the back of the 30S subunit body where it stabilizes the conformation of the head with respect to the body. This is Small ribosomal subunit protein uS5 from Hyphomonas neptunium (strain ATCC 15444).